A 411-amino-acid chain; its full sequence is Argininosuccinate lyase (411 aa).

The protein belongs to the lyase 1 family. Argininosuccinate lyase subfamily.

It is found in the cytoplasm. It carries out the reaction 2-(N(omega)-L-arginino)succinate = fumarate + L-arginine. It functions in the pathway amino-acid biosynthesis; L-arginine biosynthesis; L-arginine from L-ornithine and carbamoyl phosphate: step 3/3. This is Argininosuccinate lyase from Legionella pneumophila subsp. pneumophila (strain Philadelphia 1 / ATCC 33152 / DSM 7513).